We begin with the raw amino-acid sequence, 316 residues long: Ribosomal RNA small subunit methyltransferase H (316 aa).

S-adenosyl-L-methionine contacts are provided by residues 35 to 37 (SGH), D55, F84, D105, and Q112.

This sequence belongs to the methyltransferase superfamily. RsmH family.

The protein localises to the cytoplasm. The enzyme catalyses cytidine(1402) in 16S rRNA + S-adenosyl-L-methionine = N(4)-methylcytidine(1402) in 16S rRNA + S-adenosyl-L-homocysteine + H(+). Functionally, specifically methylates the N4 position of cytidine in position 1402 (C1402) of 16S rRNA. The chain is Ribosomal RNA small subunit methyltransferase H from Streptococcus pyogenes serotype M18 (strain MGAS8232).